The following is a 448-amino-acid chain: MPALEVNFDGLVGPTHNYAGLSYGNVASLNNAASFSNPQEAVLQGLEKMKAMHDKGLTQGVFAPHARPDLNILRRLGFSGNDAQIINKAFNADPILLRACYSASAMWTANAATVSPSPDTTDGKVHFTAANLNNKFHRSLEPATTTRLLKAMFNNQNHFAHHTHLPDQGFFGDEGAANHTRFCDSHGEQGLEMFVFGASAFNSHLPKPVKFPARQTLEASEAICRLHNLKDTSQILLQQNPDVIDQGVFHNDVIAVGNANVLLCHQQAFLNQQQALQDIREAYVGNKQFYIIEVPTSKVTIQDAVSSYLFNSQLVSLSDGSMLLVAPKECQRNSAVNDYIEEMIMADNPINQVRFFDLRQSMQNGGGPACLRLRVALNEQELAAVNPDVILTDTKYTQLCNWAQRNYRDQLGAKDFADPALLSESYQALDELTQLLNLGSVYDFQLEG.

Residues 19–28, asparagine 110, and 137–138 contribute to the substrate site; these read AGLSYGNVAS and HR. Residue glutamate 174 is part of the active site. Arginine 214 is a binding site for substrate. Histidine 250 is an active-site residue. 2 residues coordinate substrate: aspartate 252 and asparagine 364. Cysteine 370 serves as the catalytic Nucleophile.

Belongs to the succinylarginine dihydrolase family. Homodimer.

The enzyme catalyses N(2)-succinyl-L-arginine + 2 H2O + 2 H(+) = N(2)-succinyl-L-ornithine + 2 NH4(+) + CO2. Its pathway is amino-acid degradation; L-arginine degradation via AST pathway; L-glutamate and succinate from L-arginine: step 2/5. In terms of biological role, catalyzes the hydrolysis of N(2)-succinylarginine into N(2)-succinylornithine, ammonia and CO(2). The chain is N-succinylarginine dihydrolase from Pseudoalteromonas translucida (strain TAC 125).